Here is a 445-residue protein sequence, read N- to C-terminus: Probable glycine dehydrogenase (decarboxylating) subunit 1 (445 aa).

It belongs to the GcvP family. N-terminal subunit subfamily. In terms of assembly, the glycine cleavage system is composed of four proteins: P, T, L and H. In this organism, the P 'protein' is a heterodimer of two subunits.

The enzyme catalyses N(6)-[(R)-lipoyl]-L-lysyl-[glycine-cleavage complex H protein] + glycine + H(+) = N(6)-[(R)-S(8)-aminomethyldihydrolipoyl]-L-lysyl-[glycine-cleavage complex H protein] + CO2. Its function is as follows. The glycine cleavage system catalyzes the degradation of glycine. The P protein binds the alpha-amino group of glycine through its pyridoxal phosphate cofactor; CO(2) is released and the remaining methylamine moiety is then transferred to the lipoamide cofactor of the H protein. The chain is Probable glycine dehydrogenase (decarboxylating) subunit 1 from Anaeromyxobacter dehalogenans (strain 2CP-C).